The primary structure comprises 145 residues: Bacilliredoxin SERP1075 (145 aa).

Belongs to the bacilliredoxin family.

The chain is Bacilliredoxin SERP1075 from Staphylococcus epidermidis (strain ATCC 35984 / DSM 28319 / BCRC 17069 / CCUG 31568 / BM 3577 / RP62A).